The chain runs to 115 residues: WMMIVEQKCRVIVMLAKCFEAGKKKCQKYWPDSEETKTFGRVKVFNAEEVKYCGFLRRRFHIESFDEMMSVEVFQYQYINWPDHSVPNTTSNLVRMHKYVIQCLEEIGGDAPMVV.

The Tyrosine-protein phosphatase domain maps to 1–115 (WMMIVEQKCR…EIGGDAPMVV (115 aa)). Asp83 lines the substrate pocket.

It belongs to the protein-tyrosine phosphatase family.

The enzyme catalyses O-phospho-L-tyrosyl-[protein] + H2O = L-tyrosyl-[protein] + phosphate. The sequence is that of Tyrosine-protein phosphatase 23 (STY-23) from Styela plicata (Wrinkled sea squirt).